Reading from the N-terminus, the 433-residue chain is Alpha-(1,3)-fucosyltransferase fut-1 (433 aa).

The Cytoplasmic segment spans residues 1-12 (MTARSIKLFFAR). The helical; Signal-anchor for type II membrane protein transmembrane segment at 13–32 (WKYLMFACCITYLLVIYAPI) threads the bilayer. Over 33–433 (SKSEQKDWKE…GTLVDSIPLD (401 aa)) the chain is Lumenal. N194 and N359 each carry an N-linked (GlcNAc...) asparagine glycan.

It belongs to the glycosyltransferase 10 family. Mg(2+) is required as a cofactor. The cofactor is Mn(2+). Post-translationally, N-glycosylated. Glycosylation is important for enzymatic activity. In terms of tissue distribution, expressed in the pharyngeal-intestinal (PI) and anal valves. Expressed in ASG neurons and in one or two neurons in the retrovesicular ganglion and two neurons posterior to the PI valve and PHA and PHB neurons in the tail.

It is found in the golgi apparatus. The protein localises to the golgi stack membrane. The catalysed reaction is N(4)-{beta-D-GlcNAc-(1-&gt;2)-alpha-D-Man-(1-&gt;3)-[beta-D-GlcNAc-(1-&gt;2)-alpha-D-Man-(1-&gt;6)]-beta-D-Man-(1-&gt;4)-beta-D-GlcNAc-(1-&gt;4)-beta-D-GlcNAc}-L-asparaginyl-[protein] + GDP-beta-L-fucose = N(4)-{beta-D-GlcNAc-(1-&gt;2)-alpha-D-Man-(1-&gt;3)-[beta-D-GlcNAc-(1-&gt;2)-alpha-D-Man-(1-&gt;6)]-beta-D-Man-(1-&gt;4)-beta-D-GlcNAc-(1-&gt;4)-[alpha-L-Fuc(1-&gt;3)]-beta-D-GlcNAc}-L-asparaginyl-[protein] + GDP + H(+). It functions in the pathway protein modification; protein glycosylation. With respect to regulation, inhibited by Cu(2+) or Zn(2+) and to a lesser extent Ni(2+) ions. In terms of biological role, preferentially catalyzes the addition of fucose in alpha 1-3 linkage to the first GlcNAc residue (with or without alpha 1,6-linked fucose), next to the peptide chains in N-glycans. Unlike in mammals, does not require the prior action of N-acetylglucosaminyltransferase I to generate complex N-glycans. This is Alpha-(1,3)-fucosyltransferase fut-1 from Caenorhabditis elegans.